Here is a 293-residue protein sequence, read N- to C-terminus: Adenylyl-sulfate kinase 2, chloroplastic (293 aa).

Residues 1–59 (MEGLAIRASRPSVFCSIPGLGGDSHRKPPSDGFLKLPASSIPADSRKLVANSTSFHPIS) constitute a chloroplast transit peptide. 122–130 (GLSGSGKST) is a binding site for ATP. Residues aspartate 152, arginine 155, arginine 169, asparagine 172, 195-196 (IS), and glycine 245 each bind substrate. Serine 196 serves as the catalytic Phosphoserine intermediate.

Belongs to the APS kinase family. In terms of assembly, interacts with APK1. Expressed in root vasculature, root tips, leaf epidermal cells and funiculus of developing seeds.

The protein resides in the plastid. Its subcellular location is the chloroplast. It carries out the reaction adenosine 5'-phosphosulfate + ATP = 3'-phosphoadenylyl sulfate + ADP + H(+). It functions in the pathway sulfur metabolism; hydrogen sulfide biosynthesis; sulfite from sulfate: step 2/3. Functionally, catalyzes the synthesis of activated sulfate. Essential for plant reproduction and viability. Required for the production of glucosinolates. This Arabidopsis thaliana (Mouse-ear cress) protein is Adenylyl-sulfate kinase 2, chloroplastic (APK2).